A 49-amino-acid chain; its full sequence is Small, acid-soluble spore protein O (49 aa).

The interval 1-49 (MGKRKANHIVPGMNAASAQGQGTGYNEEFANEPLTAAQRQNNKKRKKNQ) is disordered.

It belongs to the SspO family.

It is found in the spore core. The protein is Small, acid-soluble spore protein O of Bacillus cytotoxicus (strain DSM 22905 / CIP 110041 / 391-98 / NVH 391-98).